The following is a 142-amino-acid chain: Hemoglobin subunit theta-1 (142 aa).

In terms of domain architecture, Globin spans 2–142; it reads ALSAEDRALV…VISALVSEYR (141 aa). Heme b-binding residues include histidine 59 and histidine 88.

This sequence belongs to the globin family.

The protein is Hemoglobin subunit theta-1 (HBQ1) of Homo sapiens (Human).